Reading from the N-terminus, the 81-residue chain is Protein RADIALIS-like 3 (81 aa).

An SANT domain is found at S7–N62.

Expressed just outside the vascular bundles in the rosette stem and the leaf traces. Not detected in floral primordia.

Its subcellular location is the nucleus. Its function is as follows. Probable transcription factor. The polypeptide is Protein RADIALIS-like 3 (RL3) (Arabidopsis thaliana (Mouse-ear cress)).